The primary structure comprises 95 residues: Aspartyl/glutamyl-tRNA(Asn/Gln) amidotransferase subunit C (95 aa).

It belongs to the GatC family. Heterotrimer of A, B and C subunits.

It catalyses the reaction L-glutamyl-tRNA(Gln) + L-glutamine + ATP + H2O = L-glutaminyl-tRNA(Gln) + L-glutamate + ADP + phosphate + H(+). The catalysed reaction is L-aspartyl-tRNA(Asn) + L-glutamine + ATP + H2O = L-asparaginyl-tRNA(Asn) + L-glutamate + ADP + phosphate + 2 H(+). In terms of biological role, allows the formation of correctly charged Asn-tRNA(Asn) or Gln-tRNA(Gln) through the transamidation of misacylated Asp-tRNA(Asn) or Glu-tRNA(Gln) in organisms which lack either or both of asparaginyl-tRNA or glutaminyl-tRNA synthetases. The reaction takes place in the presence of glutamine and ATP through an activated phospho-Asp-tRNA(Asn) or phospho-Glu-tRNA(Gln). The protein is Aspartyl/glutamyl-tRNA(Asn/Gln) amidotransferase subunit C of Sinorhizobium fredii (strain NBRC 101917 / NGR234).